We begin with the raw amino-acid sequence, 389 residues long: Phosphopentomutase (389 aa).

6 residues coordinate Mn(2+): Asp-9, Asp-282, His-287, Asp-323, His-324, and His-335.

It belongs to the phosphopentomutase family. Mn(2+) is required as a cofactor.

The protein resides in the cytoplasm. The enzyme catalyses 2-deoxy-alpha-D-ribose 1-phosphate = 2-deoxy-D-ribose 5-phosphate. It catalyses the reaction alpha-D-ribose 1-phosphate = D-ribose 5-phosphate. It participates in carbohydrate degradation; 2-deoxy-D-ribose 1-phosphate degradation; D-glyceraldehyde 3-phosphate and acetaldehyde from 2-deoxy-alpha-D-ribose 1-phosphate: step 1/2. Functionally, isomerase that catalyzes the conversion of deoxy-ribose 1-phosphate (dRib-1-P) and ribose 1-phosphate (Rib-1-P) to deoxy-ribose 5-phosphate (dRib-5-P) and ribose 5-phosphate (Rib-5-P), respectively. The polypeptide is Phosphopentomutase (Kosmotoga olearia (strain ATCC BAA-1733 / DSM 21960 / TBF 19.5.1)).